Reading from the N-terminus, the 229-residue chain is Protein-L-isoaspartate O-methyltransferase (229 aa).

The active site involves serine 78.

This sequence belongs to the methyltransferase superfamily. L-isoaspartyl/D-aspartyl protein methyltransferase family.

Its subcellular location is the cytoplasm. The enzyme catalyses [protein]-L-isoaspartate + S-adenosyl-L-methionine = [protein]-L-isoaspartate alpha-methyl ester + S-adenosyl-L-homocysteine. Its function is as follows. Catalyzes the methyl esterification of L-isoaspartyl residues in peptides and proteins that result from spontaneous decomposition of normal L-aspartyl and L-asparaginyl residues. It plays a role in the repair and/or degradation of damaged proteins. The chain is Protein-L-isoaspartate O-methyltransferase from Chromohalobacter salexigens (strain ATCC BAA-138 / DSM 3043 / CIP 106854 / NCIMB 13768 / 1H11).